Consider the following 1214-residue polypeptide: [F-actin]-monooxygenase mical1 (1214 aa).

A monooxygenase domain region spans residues 1–488 (MVNPLDSVNP…KRLYEAEEQE (488 aa)). FAD contacts are provided by residues C96, 115-117 (EKR), 122-124 (RNN), F182, Y292, and D392. The tract at residues 484 to 505 (AEEQESKPNKLKKPDIKAKPRK) is disordered. Positions 508-614 (MKRLEELLSW…YLTQIRNALT (107 aa)) constitute a Calponin-homology (CH) domain. Residues 649–676 (HKDRLASVKGPRQQNMKEKEEKKDVKEE) form a disordered region. Basic and acidic residues predominate over residues 663–676 (NMKEKEEKKDVKEE). Residues 686–748 (EPCYFCKKHL…ELHSLAEEEE (63 aa)) form the LIM zinc-binding domain. Zn(2+)-binding residues include C688, C691, H709, C712, C715, C718, C738, and H741. Positions 747-1019 (EEGDEGHGGA…DDEDEDEEDL (273 aa)) are disordered. The span at 796–815 (PDFDESTEFPAPDQDEPPDL) shows a compositional bias: acidic residues. Positions 828 to 841 (SAENTNMENQQHNI) are enriched in polar residues. The segment covering 910-922 (RGSSSAASTSSSS) has biased composition (low complexity). The span at 974-987 (SPWNLSSPRLQQRF) shows a compositional bias: polar residues. The span at 1003–1019 (VSEDDNEDDEDEDEEDL) shows a compositional bias: acidic residues. The region spanning 1053–1199 (KMTEIQRFHK…EVNDQFNSSL (147 aa)) is the bMERB domain. The stretch at 1061–1131 (HKAQSIQRRL…DLMVASRQLE (71 aa)) forms a coiled coil. Residues 1194–1214 (QFNSSLDAKRRSTTASQVHWE) form a disordered region.

It belongs to the Mical family. It depends on FAD as a cofactor.

The protein resides in the cytoplasm. The protein localises to the cytoskeleton. It is found in the midbody. Its subcellular location is the endosome membrane. It catalyses the reaction L-methionyl-[F-actin] + NADPH + O2 + H(+) = L-methionyl-(R)-S-oxide-[F-actin] + NADP(+) + H2O. The catalysed reaction is NADPH + O2 + H(+) = H2O2 + NADP(+). Functionally, monooxygenase that promotes depolymerization of F-actin by mediating oxidation of specific methionine residues on actin to form methionine-sulfoxide, resulting in actin filament disassembly and prevent repolymerization. May be involved in endosomal tubule extension and neosynthesized protein export. The polypeptide is [F-actin]-monooxygenase mical1 (mical1) (Danio rerio (Zebrafish)).